The sequence spans 350 residues: Chemokine C-C motif receptor-like 2 (350 aa).

Residues 1-43 (MANYTSAPEDDYDVFIEDDLSNDERELCSPYDPQALLAQLVPY) are Extracellular-facing. Residue N3 is glycosylated (N-linked (GlcNAc...) asparagine). The chain crosses the membrane as a helical span at residues 44–64 (LFITVFLVGLLDNILVVLIMV). At 65–74 (KYKGLKQVEN) the chain is on the cytoplasmic side. The helical transmembrane segment at 75–95 (IYLLNLAVCNLCFLCTLPFWV) threads the bilayer. Topologically, residues 96–110 (HMAWHEGDPGEPLCK) are extracellular. C109 and C187 form a disulfide bridge. A helical membrane pass occupies residues 111–131 (ILLVLYSVGLFSEAFFNVLLT). The Cytoplasmic portion of the chain corresponds to 132 to 149 (VQRYQKFFQMRGFFSATR). Residues 150–170 (MVAGSIFPSALVWVIAVLVML) traverse the membrane as a helical segment. The Extracellular segment spans residues 171 to 204 (PELAFYKPQMENQKYKCFFGRPLFLPADETFWKH). The chain crosses the membrane as a helical span at residues 205 to 225 (FLTLKMNILGFLLPLFVFVFC). Residues 226–244 (YVRMRRTLKFGERGYDLFK) lie on the Cytoplasmic side of the membrane. Residues 245–265 (LVFTIMVVFLLMWGPYNIALF) traverse the membrane as a helical segment. The Extracellular portion of the chain corresponds to 266–288 (LSAFNEHFSLHGCESSHNLDRST). A helical membrane pass occupies residues 289-309 (LITKIIATTHCCVNPLLYVFF). Topologically, residues 310–350 (DEAFRKHLYHFCHLCNDTAPQPTEEPAQGTSREEPCLSTKM) are cytoplasmic. The interval 329–350 (PQPTEEPAQGTSREEPCLSTKM) is disordered.

Belongs to the G-protein coupled receptor 1 family.

Its subcellular location is the cell membrane. Functionally, receptor for CCL19 and chemerin/RARRES2. Does not appear to be a signaling receptor, but may have a role in modulating chemokine-triggered immune responses by capturing and internalizing CCL19 or by presenting RARRES2 ligand to CMKLR1, a functional signaling receptor. Plays a critical role for the development of Th2 responses. The chain is Chemokine C-C motif receptor-like 2 (CCRL2) from Sus scrofa (Pig).